The chain runs to 254 residues: Sensory rhodopsin (254 aa).

Residues 1-4 (MTGA) are Extracellular-facing. A helical transmembrane segment spans residues 5–26 (VTSAYWLAAVAFLIGVGITAAL). Over 27–35 (YAKLEGSRA) the chain is Cytoplasmic. Residues 36–57 (RTRLAALAVIPGFAGLSYVGMA) traverse the membrane as a helical segment. Over 58–71 (LGIGTVTVNGAELV) the chain is Extracellular. A helical membrane pass occupies residues 72–93 (GLRYVDWVVTTPLLVGFIGYNA). The Cytoplasmic portion of the chain corresponds to 94-96 (GAS). The helical transmembrane segment at 97–119 (RRAIAGVMIADALMIVFGAAAVV) threads the bilayer. At 120-123 (SGGT) the chain is on the extracellular side. Residues 124–151 (LKWALFGVSALFHVSLFAYLYVIFPGGI) traverse the membrane as a helical segment. At 152-154 (PDD) the chain is on the cytoplasmic side. Residues 155 to 182 (PMQRGLFSLLKNHVGLLWLAYPFVWLMG) traverse the membrane as a helical segment. At 183 to 190 (PAGIGFTG) the chain is on the extracellular side. Residues 191–223 (AVGAALTYAFLDVLAKVPYVYFFYARRQAFIDV) form a helical membrane-spanning segment. Lys-206 carries the post-translational modification N6-(retinylidene)lysine. At 224 to 254 (TDSRAAAKGDGPAVGGEAPVATGDDAPTAAD) the chain is on the cytoplasmic side. The interval 231 to 254 (KGDGPAVGGEAPVATGDDAPTAAD) is disordered.

The protein belongs to the archaeal/bacterial/fungal opsin family.

It localises to the cell membrane. Functionally, involved in the control of phototaxis. The sequence is that of Sensory rhodopsin (sop) from Halorubrum sodomense.